The primary structure comprises 326 residues: Protein BCCIP homolog (326 aa).

Positions 37–81 (SHPEDCQCSDEDISFDEKQKIPNLPRKGKEEQVSDSSDEEDSQED) are disordered. Phosphoserine is present on Ser-45. Over residues 72–81 (SSDEEDSQED) the composition is skewed to acidic residues.

Belongs to the BCP1 family.

The polypeptide is Protein BCCIP homolog (Arabidopsis thaliana (Mouse-ear cress)).